A 31-amino-acid chain; its full sequence is KGKGFWSWASKATSWLTGPQQPGSPLLKKHR.

The protein resides in the secreted. Its function is as follows. Inhibits a wide spectrum of lactic acid bacteria. The chain is Bacteriocin leucocin-B from Leuconostoc mesenteroides.